A 216-amino-acid chain; its full sequence is 3-isopropylmalate dehydratase small subunit (216 aa).

Belongs to the LeuD family. LeuD type 1 subfamily. As to quaternary structure, heterodimer of LeuC and LeuD.

It carries out the reaction (2R,3S)-3-isopropylmalate = (2S)-2-isopropylmalate. It functions in the pathway amino-acid biosynthesis; L-leucine biosynthesis; L-leucine from 3-methyl-2-oxobutanoate: step 2/4. Catalyzes the isomerization between 2-isopropylmalate and 3-isopropylmalate, via the formation of 2-isopropylmaleate. This is 3-isopropylmalate dehydratase small subunit from Burkholderia ambifaria (strain MC40-6).